Here is a 253-residue protein sequence, read N- to C-terminus: Triosephosphate isomerase (253 aa).

8–10 (NWK) is a substrate binding site. The active-site Electrophile is the H91. E168 functions as the Proton acceptor in the catalytic mechanism. Substrate is bound by residues G174, S213, and 234–235 (GG).

The protein belongs to the triosephosphate isomerase family. Homodimer.

It localises to the cytoplasm. It carries out the reaction D-glyceraldehyde 3-phosphate = dihydroxyacetone phosphate. It participates in carbohydrate biosynthesis; gluconeogenesis. Its pathway is carbohydrate degradation; glycolysis; D-glyceraldehyde 3-phosphate from glycerone phosphate: step 1/1. In terms of biological role, involved in the gluconeogenesis. Catalyzes stereospecifically the conversion of dihydroxyacetone phosphate (DHAP) to D-glyceraldehyde-3-phosphate (G3P). This chain is Triosephosphate isomerase, found in Acidiphilium cryptum (strain JF-5).